Consider the following 62-residue polypeptide: Small ribosomal subunit protein bS21 (62 aa).

Over residues 43-52 (VKKKLKSEAA) the composition is skewed to basic and acidic residues. Residues 43–62 (VKKKLKSEAARKRKNRRRFK) form a disordered region. Residues 53–62 (RKRKNRRRFK) show a composition bias toward basic residues.

The protein belongs to the bacterial ribosomal protein bS21 family.

In Lactiplantibacillus plantarum (strain ATCC BAA-793 / NCIMB 8826 / WCFS1) (Lactobacillus plantarum), this protein is Small ribosomal subunit protein bS21.